A 122-amino-acid polypeptide reads, in one-letter code: MIQPQSYLKVTDNSGARKLMCIRILGTNNCKYANTGDTIIAVVKESVPNMPVKKSEIVRAVIVRTRKEMKRDNGIIIRFDDNAAVVINREGNLKGTRVHGPVDRELWKKNFTKIVSLAPEAF.

Belongs to the universal ribosomal protein uL14 family. Part of the 50S ribosomal subunit.

Its subcellular location is the plastid. It localises to the chloroplast. Binds to 23S rRNA. The protein is Large ribosomal subunit protein uL14c of Psilotum nudum (Whisk fern).